A 669-amino-acid chain; its full sequence is Methionine--tRNA ligase (669 aa).

Residues 14-24 (YYPSGKLHIGN) carry the 'HIGH' region motif. Residue H161 coordinates Zn(2+). Residues 309 to 313 (KMSKS) carry the 'KMSKS' region motif. K312 contacts ATP. A tRNA-binding domain is found at 566 to 669 (DFDKVELKVA…KEMPNGAGIA (104 aa)).

It belongs to the class-I aminoacyl-tRNA synthetase family. MetG type 2B subfamily. Homodimer.

It localises to the cytoplasm. It carries out the reaction tRNA(Met) + L-methionine + ATP = L-methionyl-tRNA(Met) + AMP + diphosphate. Its function is as follows. Is required not only for elongation of protein synthesis but also for the initiation of all mRNA translation through initiator tRNA(fMet) aminoacylation. This Enterococcus faecalis (strain ATCC 700802 / V583) protein is Methionine--tRNA ligase.